The sequence spans 230 residues: Protein RESPONSE TO ABA AND SALT 1 (230 aa).

The region spanning 7–230 is the DOG1 domain; it reads SQSFTIFVDG…RLRDRDQERA (224 aa).

Its function is as follows. Negative regulator of salt (NaCl) tolerance probably by enhancing abscisic acid (ABA) sensitivity. This Arabidopsis thaliana (Mouse-ear cress) protein is Protein RESPONSE TO ABA AND SALT 1.